The sequence spans 303 residues: Bifunctional protein FolD (303 aa).

NADP(+)-binding positions include 165–167, S190, and I231; that span reads GRS.

This sequence belongs to the tetrahydrofolate dehydrogenase/cyclohydrolase family. As to quaternary structure, homodimer.

The enzyme catalyses (6R)-5,10-methylene-5,6,7,8-tetrahydrofolate + NADP(+) = (6R)-5,10-methenyltetrahydrofolate + NADPH. It carries out the reaction (6R)-5,10-methenyltetrahydrofolate + H2O = (6R)-10-formyltetrahydrofolate + H(+). Its pathway is one-carbon metabolism; tetrahydrofolate interconversion. Its function is as follows. Catalyzes the oxidation of 5,10-methylenetetrahydrofolate to 5,10-methenyltetrahydrofolate and then the hydrolysis of 5,10-methenyltetrahydrofolate to 10-formyltetrahydrofolate. In Prochlorococcus marinus (strain NATL1A), this protein is Bifunctional protein FolD.